Consider the following 306-residue polypeptide: Ribonuclease Z (306 aa).

Histidine 63, histidine 65, aspartate 67, histidine 68, histidine 141, aspartate 211, and histidine 269 together coordinate Zn(2+). The Proton acceptor role is filled by aspartate 67.

This sequence belongs to the RNase Z family. Homodimer. It depends on Zn(2+) as a cofactor.

The catalysed reaction is Endonucleolytic cleavage of RNA, removing extra 3' nucleotides from tRNA precursor, generating 3' termini of tRNAs. A 3'-hydroxy group is left at the tRNA terminus and a 5'-phosphoryl group is left at the trailer molecule.. Zinc phosphodiesterase, which displays some tRNA 3'-processing endonuclease activity. Probably involved in tRNA maturation, by removing a 3'-trailer from precursor tRNA. The protein is Ribonuclease Z of Staphylococcus carnosus (strain TM300).